Reading from the N-terminus, the 683-residue chain is MNEDKDKRDSIQMSMKGCRTNNGFVQNEDIQEQDPDSRDTPQSNAVSIPAPEEPQLKVVRPYAGMPKEVLFQFSGQARYRVPREILFWLTVVSVFLLIGATIAIIIISPKCLDWWQAGPMYQIYPRSFKDSDKDGNGDLKGIQEKLDYITALNIKTIWITSFYKSPLKDFRYAVEDFKEIDPIFGTMKDFENLVAAVHDKGLKLIIDFIPNHTSDKHPWFQSSRTRSGKYTDYYIWHNCTHANGVTTPPNNWLSVYGNSSWQFDEERKQCYFHQFLKEQPDLNFRNPAVQEEIKEIIKFWLSKGVDGFSFDAVKFLLEAKDLRNEIQVNTSQIPDTVTRYSELYHDFTTTQVGMHDLVRDFRQTMNQFSREPGRYRFMGTEVSAESTERTMVYYGLSFIQEADFPFNKYLATLDTLSGHTVYEAITSWMENMPEGKWPNWMIGGPETSRLTSRVGSEYVNAMNMLLFTLPGTPITYYGEEIGMGDISITNLNERYDTNALLSKSPMQWDNSSNAGFTEANHTWLPTNSDYHTVNVDVQKTQPSSALRLYQDLSLLHARELLLSRGWFCLLRDDNHSVVYTRELDGIDKVFLVVLNFGESSTVLNLQETISDVPTKLRIRLSTNPASKGSDVDTHAVSLEKGEGLILEHSMKTLLHHQKAFRDKCFISNRACYSSVLDLLYSSC.

Basic and acidic residues predominate over residues methionine 1–serine 10. The interval methionine 1–alanine 50 is disordered. The Cytoplasmic portion of the chain corresponds to methionine 1–leucine 86. The residue at position 10 (serine 10) is a Phosphoserine. The helical; Signal-anchor for type II membrane protein transmembrane segment at phenylalanine 87 to isoleucine 107 threads the bilayer. At serine 108–cysteine 683 the chain is on the extracellular side. Position 211 (asparagine 211) interacts with Ca(2+). N-linked (GlcNAc...) asparagine glycans are attached at residues asparagine 211, asparagine 238, and asparagine 258. A disulfide bond links cysteine 239 and cysteine 270. Residues aspartate 281, phenylalanine 315, leucine 316, and glutamate 318 each contribute to the Ca(2+) site. A glycan (N-linked (GlcNAc...) asparagine) is linked at asparagine 329. Residue serine 383 is modified to Phosphoserine. Asparagine 510, asparagine 520, and asparagine 574 each carry an N-linked (GlcNAc...) asparagine glycan. 2 disulfides stabilise this stretch: cysteine 568–cysteine 664 and cysteine 671–cysteine 683.

In terms of assembly, disulfide-linked heterodimer composed of the catalytic light subunit SLC7A9 and the heavy subunit SLC3A1. The heterodimer is the minimal functional unit. Assembles in non-covalently linked heterotetramers (dimers of heterodimers) and higher order oligomers; the oligomerization is mediated by SLC3A1 likely to prevent degradation in the endoplasmic reticulum and facilitate heteromer trafficking to the plasma membrane. Disulfide-linked heterodimer composed of the catalytic light subunit SLC7A13 and the heavy subunit SLC3A1. Predominantly expressed in kidney and intestine. In kidney localized to the apical membrane of the proximal tubules.

The protein resides in the cell membrane. It is found in the apical cell membrane. In terms of biological role, acts as a chaperone that facilitates biogenesis and trafficking of functional transporter heteromers to the plasma membrane. Associates with SLC7A9 to form a functional transporter complex that mediates the electrogenic exchange between cationic amino acids and neutral amino acids, with a stoichiometry of 1:1. SLC7A9-SLC3A1 transporter has system b(0,+)-like activity with high affinity for extracellular cationic amino acids and L-cystine and lower affinity for intracellular neutral amino acids. Substrate exchange is driven by high concentration of intracellular neutral amino acids and the intracellular reduction of L-cystine to L-cysteine. SLC7A9-SLC3A1 acts as a major transporter for reabsorption of L-cystine and dibasic amino acids across the brush border membrane in early proximal tubules. Associates with SLC7A13 to form a functional complex that transports anionic and neutral amino acids via exchange or facilitated diffusion. SLC7A13-SLC3A1 may act as a major transporter for L-cystine in late proximal tubules, ensuring its reabsorption from the luminal fluid in exchange for cytosolic L-glutamate or L-aspartate. The sequence is that of Amino acid transporter heavy chain SLC3A1 (Slc3a1) from Rattus norvegicus (Rat).